Reading from the N-terminus, the 93-residue chain is Putative pterin-4-alpha-carbinolamine dehydratase (93 aa).

Belongs to the pterin-4-alpha-carbinolamine dehydratase family.

The catalysed reaction is (4aS,6R)-4a-hydroxy-L-erythro-5,6,7,8-tetrahydrobiopterin = (6R)-L-erythro-6,7-dihydrobiopterin + H2O. This is Putative pterin-4-alpha-carbinolamine dehydratase from Nostoc sp. (strain PCC 7120 / SAG 25.82 / UTEX 2576).